We begin with the raw amino-acid sequence, 789 residues long: Probable Xaa-Pro aminopeptidase SNOG_02267 (789 aa).

Positions 240, 251, 375, and 416 each coordinate Mn(2+). Disordered stretches follow at residues 607 to 658 and 670 to 704; these read SMSK…TGLA and NHVS…DDAL. The span at 622-637 shows a compositional bias: polar residues; the sequence is VISQKQIRNRRSVSST. Over residues 638–650 the composition is skewed to basic and acidic residues; that stretch reads ARHDLRGDRERPQ.

Belongs to the peptidase M24B family. Mn(2+) is required as a cofactor.

The enzyme catalyses Release of any N-terminal amino acid, including proline, that is linked to proline, even from a dipeptide or tripeptide.. In terms of biological role, catalyzes the removal of a penultimate prolyl residue from the N-termini of peptides. This is Probable Xaa-Pro aminopeptidase SNOG_02267 from Phaeosphaeria nodorum (strain SN15 / ATCC MYA-4574 / FGSC 10173) (Glume blotch fungus).